Consider the following 120-residue polypeptide: Phosphoribosyl-AMP cyclohydrolase (120 aa).

Residue aspartate 74 coordinates Mg(2+). Cysteine 75 contributes to the Zn(2+) binding site. Mg(2+) contacts are provided by aspartate 76 and aspartate 78. Positions 91 and 98 each coordinate Zn(2+).

It belongs to the PRA-CH family. In terms of assembly, homodimer. The cofactor is Mg(2+). Zn(2+) is required as a cofactor.

The protein resides in the cytoplasm. It catalyses the reaction 1-(5-phospho-beta-D-ribosyl)-5'-AMP + H2O = 1-(5-phospho-beta-D-ribosyl)-5-[(5-phospho-beta-D-ribosylamino)methylideneamino]imidazole-4-carboxamide. It functions in the pathway amino-acid biosynthesis; L-histidine biosynthesis; L-histidine from 5-phospho-alpha-D-ribose 1-diphosphate: step 3/9. Functionally, catalyzes the hydrolysis of the adenine ring of phosphoribosyl-AMP. The sequence is that of Phosphoribosyl-AMP cyclohydrolase from Natronomonas pharaonis (strain ATCC 35678 / DSM 2160 / CIP 103997 / JCM 8858 / NBRC 14720 / NCIMB 2260 / Gabara) (Halobacterium pharaonis).